A 554-amino-acid chain; its full sequence is Phosphomethylpyrimidine synthase (554 aa).

Substrate-binding positions include asparagine 188, methionine 217, tyrosine 246, histidine 282, 302–304 (SRG), 343–346 (DGLR), and glutamate 382. Histidine 386 contacts Zn(2+). Residue tyrosine 409 participates in substrate binding. Histidine 450 serves as a coordination point for Zn(2+). [4Fe-4S] cluster-binding residues include cysteine 530, cysteine 533, and cysteine 538.

The protein belongs to the ThiC family. Homodimer. The cofactor is [4Fe-4S] cluster.

The enzyme catalyses 5-amino-1-(5-phospho-beta-D-ribosyl)imidazole + S-adenosyl-L-methionine = 4-amino-2-methyl-5-(phosphooxymethyl)pyrimidine + CO + 5'-deoxyadenosine + formate + L-methionine + 3 H(+). The protein operates within cofactor biosynthesis; thiamine diphosphate biosynthesis. Functionally, catalyzes the synthesis of the hydroxymethylpyrimidine phosphate (HMP-P) moiety of thiamine from aminoimidazole ribotide (AIR) in a radical S-adenosyl-L-methionine (SAM)-dependent reaction. This is Phosphomethylpyrimidine synthase from Coxiella burnetii (strain RSA 493 / Nine Mile phase I).